We begin with the raw amino-acid sequence, 708 residues long: Probable GTP diphosphokinase RSH3, chloroplastic (708 aa).

Disordered regions lie at residues 1–50 and 109–134; these read MSLP…AAGG and HSPV…SWLA. The transit peptide at 1-58 directs the protein to the chloroplast; sequence MSLPAISLYTSPPPGAVYSSEFDPSSRGSSPPCSTAPPSTSHRPPAAAGGLSCLFSSP. Low complexity-rich tracts occupy residues 29–41 and 118–131; these read SSPP…PSTS and PSSS…PPAS. Positions 233–337 constitute an HD domain; sequence YLQHCVETAV…IKLADRVHNM (105 aa).

This sequence belongs to the RelA/SpoT family.

The protein localises to the plastid. It localises to the chloroplast. The enzyme catalyses GTP + ATP = guanosine 3'-diphosphate 5'-triphosphate + AMP. Probable ppGpp (guanosine 3'-diphosphate 5'-diphosphate) synthetase that may be involved in a rapid plant ppGpp-mediated response to pathogens and other stresses. The protein is Probable GTP diphosphokinase RSH3, chloroplastic (RSH3) of Oryza sativa subsp. japonica (Rice).